The chain runs to 71 residues: Small ribosomal subunit protein eS17 (71 aa).

This sequence belongs to the eukaryotic ribosomal protein eS17 family.

The polypeptide is Small ribosomal subunit protein eS17 (Pyrobaculum islandicum (strain DSM 4184 / JCM 9189 / GEO3)).